The following is a 78-amino-acid chain: Probable Fe(2+)-trafficking protein (78 aa).

It belongs to the Fe(2+)-trafficking protein family. In terms of assembly, monomer.

Could be a mediator in iron transactions between iron acquisition and iron-requiring processes, such as synthesis and/or repair of Fe-S clusters in biosynthetic enzymes. In Wigglesworthia glossinidia brevipalpis, this protein is Probable Fe(2+)-trafficking protein.